Here is a 400-residue protein sequence, read N- to C-terminus: Formate-dependent phosphoribosylglycinamide formyltransferase (400 aa).

N(1)-(5-phospho-beta-D-ribosyl)glycinamide-binding positions include 22-23 and Glu-82; that span reads EL. ATP-binding positions include Arg-115, Lys-157, 162–167, 197–200, and Glu-205; these read SSGKGQ and EGFI. The region spanning 120-315 is the ATP-grasp domain; it reads RLAAETLGVP…EFELHARAIL (196 aa). The Mg(2+) site is built by Glu-274 and Glu-286. N(1)-(5-phospho-beta-D-ribosyl)glycinamide-binding positions include Asp-293, Lys-362, and 369–370; that span reads RR.

This sequence belongs to the PurK/PurT family. As to quaternary structure, homodimer.

It catalyses the reaction N(1)-(5-phospho-beta-D-ribosyl)glycinamide + formate + ATP = N(2)-formyl-N(1)-(5-phospho-beta-D-ribosyl)glycinamide + ADP + phosphate + H(+). Its pathway is purine metabolism; IMP biosynthesis via de novo pathway; N(2)-formyl-N(1)-(5-phospho-D-ribosyl)glycinamide from N(1)-(5-phospho-D-ribosyl)glycinamide (formate route): step 1/1. In terms of biological role, involved in the de novo purine biosynthesis. Catalyzes the transfer of formate to 5-phospho-ribosyl-glycinamide (GAR), producing 5-phospho-ribosyl-N-formylglycinamide (FGAR). Formate is provided by PurU via hydrolysis of 10-formyl-tetrahydrofolate. This Variovorax paradoxus (strain S110) protein is Formate-dependent phosphoribosylglycinamide formyltransferase.